The sequence spans 228 residues: Lipoprotein-releasing system ATP-binding protein LolD (228 aa).

In terms of domain architecture, ABC transporter spans 7–228 (LNCQNLTKDY…MQDGVLRPEM (222 aa)). ATP is bound at residue 43 to 50 (GSSGSGKS).

The protein belongs to the ABC transporter superfamily. Lipoprotein translocase (TC 3.A.1.125) family. In terms of assembly, the complex is composed of two ATP-binding proteins (LolD) and two transmembrane proteins (LolC and LolE).

It localises to the cell inner membrane. Its function is as follows. Part of the ABC transporter complex LolCDE involved in the translocation of mature outer membrane-directed lipoproteins, from the inner membrane to the periplasmic chaperone, LolA. Responsible for the formation of the LolA-lipoprotein complex in an ATP-dependent manner. This Mannheimia succiniciproducens (strain KCTC 0769BP / MBEL55E) protein is Lipoprotein-releasing system ATP-binding protein LolD.